Here is a 429-residue protein sequence, read N- to C-terminus: MREALNQGLIDFLKASPTPFHATAALAQRLEAAGYQRLDERETWTTEPNGRYYVTRNDSSIIAFKLGRHSPLQGGIRLVGAHTDSPCLRVKPQPELQRQGFWQLGVEVYGGALLAPWFDRDLSLAGRVTFRRDGKVESQLIDFKLPIAIIPNLAIHLNREANQGWAINAQTELPPILAQFAGDERVDFRAVLTDQLAREHGLNADVVLDYELSFYDTQSAAVIGLNGDFIAGARLDNLLSCYAGLQALLTSETDETCVLVCNDHEEVGSCSACGADGPMLEQTLRRLLPEGDEFVRTIQKSLLVSADNAHGVHPNYAEKHDANHGPKLNAGPVIKVNSNQRYATNSETAGFFRHLCMAQEVPVQSFVVRSDMGCGSTIGPITASHLGVRTVDIGLPTFAMHSIRELCGSHDLAHLVKVLGAFYASHDLP.

3 residues coordinate Zn(2+): His-82, His-156, and His-401.

This sequence belongs to the peptidase M18 family. Requires Zn(2+) as cofactor.

The sequence is that of Probable M18 family aminopeptidase 2 from Pseudomonas fluorescens (strain SBW25).